The following is a 615-amino-acid chain: Elongation factor 4 (615 aa).

The region spanning 14-200 (SKIRNFCIIA…KVAELIPAPT (187 aa)) is the tr-type G domain. GTP is bound by residues 26-31 (DHGKST) and 147-150 (NKID).

This sequence belongs to the TRAFAC class translation factor GTPase superfamily. Classic translation factor GTPase family. LepA subfamily.

It is found in the cell membrane. It catalyses the reaction GTP + H2O = GDP + phosphate + H(+). Functionally, required for accurate and efficient protein synthesis under certain stress conditions. May act as a fidelity factor of the translation reaction, by catalyzing a one-codon backward translocation of tRNAs on improperly translocated ribosomes. Back-translocation proceeds from a post-translocation (POST) complex to a pre-translocation (PRE) complex, thus giving elongation factor G a second chance to translocate the tRNAs correctly. Binds to ribosomes in a GTP-dependent manner. In Corynebacterium aurimucosum (strain ATCC 700975 / DSM 44827 / CIP 107346 / CN-1) (Corynebacterium nigricans), this protein is Elongation factor 4.